Consider the following 606-residue polypeptide: MILQLPSCLCPILLIVVGSILSGSASGCPQRCDCSPQDRSVLCHRKRYLDVPEGIPTDTRLLDLSKNRIKALNQDEFSAFPYLEELELNENIVSIIEPGAFNGLFNLRSLGLRSNRLKLIPLGVFTGLSNLTQLDISENKIVILLDDMFQDLYNLKSLEVGDNDLVYISHRAFRGLNSLEELTLEKCNLTSVPTEALSHLHGLITLKLRYLNINVIRDYSFKRLYRLKNLEIAHWPYLDTMTSNGLYGLNLTSLSITHSNLSSIPYVAIRHLVYLRFLNLSYNPITAVEGSMLYELLRLQEFHLVGGQLSVVEPYAFRGLNHLKVLNVSSNYLSTLEESSFHSVGNLETLILDKNPLACDCRLLWIFRRRWRLNFSRQQPSCSSPEYVQGKEFKDFPDVLQPNYFTCRRARIQDHSAQVVYVDEGHTVHFFCRADGDPPPTILWQSPRKTFITSKSNGRLTVFPDGTLEVRYAQVQDNGTYHCIASNAGGNDTSLAHLHVRSYSPNWPHKPNKTFAFMSNQPNESDVNSTRASVPFPFDIKTLIIATTMGFISFLGVVLFCLVLLFLWSRGKGNTKHNIEIEYVPRKSDAGLSSADAPRKFNMKMI.

The signal sequence occupies residues 1–27 (MILQLPSCLCPILLIVVGSILSGSASG). 2 disulfide bridges follow: C28–C34 and C32–C43. One can recognise an LRRNT domain in the interval 28–57 (CPQRCDCSPQDRSVLCHRKRYLDVPEGIPT). The Extracellular portion of the chain corresponds to 28-547 (CPQRCDCSPQ…FDIKTLIIAT (520 aa)). LRR repeat units follow at residues 58–79 (DTRL…EFSA), 82–103 (YLEE…AFNG), 106–127 (NLRS…VFTG), 130–151 (NLTQ…MFQD), 154–175 (NLKS…AFRG), 178–199 (SLEE…ALSH), 202–223 (GLIT…SFKR), 250–271 (NLTS…AIRH), 274–295 (YLRF…MLYE), 298–319 (RLQE…AFRG), and 322–343 (HLKV…SFHS). A glycan (N-linked (GlcNAc...) asparagine) is linked at N130. The N-linked (GlcNAc...) asparagine glycan is linked to N188. N-linked (GlcNAc...) asparagine glycans are attached at residues N250, N260, and N279. Residues N327, N374, N478, N491, N512, N523, and N528 are each glycosylated (N-linked (GlcNAc...) asparagine). Positions 355 to 409 (NPLACDCRLLWIFRRRWRLNFSRQQPSCSSPEYVQGKEFKDFPDVLQPNYFTCRR) constitute an LRRCT domain. 3 disulfide bridges follow: C359–C382, C361–C407, and C432–C483. Residues 397 to 496 (PDVLQPNYFT…NAGGNDTSLA (100 aa)) form the Ig-like C2-type domain. Residues 548-568 (TMGFISFLGVVLFCLVLLFLW) form a helical membrane-spanning segment. The Cytoplasmic segment spans residues 569–606 (SRGKGNTKHNIEIEYVPRKSDAGLSSADAPRKFNMKMI).

It localises to the cell membrane. May play a role in regulating axonal regeneration and plasticity in the adult central nervous system. This chain is Leucine-rich repeat and immunoglobulin-like domain-containing nogo receptor-interacting protein 1 (lingo1), found in Xenopus tropicalis (Western clawed frog).